Consider the following 207-residue polypeptide: Small ribosomal subunit protein bS6c (207 aa).

Residues 1–59 (MASSLCVSNSTICPLPNVSSQPLLSFSHSLRPFISKSKPMCASIQKRDGSQFVVKSQAL) constitute a chloroplast transit peptide. The tract at residues 69 to 99 (GFGSDDDPTSPSGSGVSTALEDKPEPQCPPG) is disordered. Positions 77 to 86 (TSPSGSGVST) are enriched in low complexity.

This sequence belongs to the bacterial ribosomal protein bS6 family. Part of the 30S ribosomal subunit.

It is found in the plastid. It localises to the chloroplast. In terms of biological role, binds together with bS18 to 16S ribosomal RNA. The protein is Small ribosomal subunit protein bS6c (RPS6) of Arabidopsis thaliana (Mouse-ear cress).